The sequence spans 674 residues: Tripartite terminase subunit 3 (674 aa).

The Walker A motif motif lies at 212-219 (VPRRHGKT). The short motif at 305–310 (LLLVDE) is the Walker B motif element. Glutamate 310 acts as the For ATPase activity in catalysis. Residues aspartate 463, glutamate 534, and aspartate 651 each act as for nuclease activity in the active site.

It belongs to the herpesviridae TRM3 protein family. As to quaternary structure, interacts with the terminase subunits TRM1 and TRM2. Interacts with portal protein.

The protein resides in the host nucleus. Component of the molecular motor that translocates viral genomic DNA in empty capsid during DNA packaging. Forms a tripartite terminase complex together with TRM1 and TRM2 in the host cytoplasm. Once the complex reaches the host nucleus, it interacts with the capsid portal vertex. This portal forms a ring in which genomic DNA is translocated into the capsid. TRM3 carries an RNase H-like nuclease activity that plays an important role for the cleavage of concatemeric viral DNA into unit length genomes. The polypeptide is Tripartite terminase subunit 3 (Homo sapiens (Human)).